The chain runs to 138 residues: Ribosome maturation factor RimP (138 aa).

This sequence belongs to the RimP family.

The protein resides in the cytoplasm. In terms of biological role, required for maturation of 30S ribosomal subunits. The polypeptide is Ribosome maturation factor RimP (Campylobacter curvus (strain 525.92)).